Here is a 95-residue protein sequence, read N- to C-terminus: Probable FAD-linked sulfhydryl oxidase OPG072 (95 aa).

Residues 1-8 lie on the Intravirion side of the membrane; the sequence is MNPKHWGR. One can recognise an ERV/ALR sulfhydryl oxidase domain in the interval 1-95; sequence MNPKHWGRAV…AIDVSKVKPL (95 aa). The chain crosses the membrane as a helical span at residues 9–25; sequence AVWTIIFIVLSQAGLDG. Topologically, residues 26–95 are virion surface; the sequence is NIEACKRKLY…AIDVSKVKPL (70 aa). Cysteine 43 and cysteine 46 are oxidised to a cystine.

It belongs to the orthopoxvirus OPG072 family. Interacts with OPG128; this interaction involves formation of a transient disulfide-bonded intermediate, allowing disulfide bond transfer. FAD is required as a cofactor.

It is found in the virion membrane. The protein localises to the host cytoplasm. It catalyses the reaction 2 R'C(R)SH + O2 = R'C(R)S-S(R)CR' + H2O2. In terms of biological role, FAD-dependent sulfhydryl oxidase that catalyzes disulfide bond formation. The complete pathway for formation of disulfide bonds in intracellular virion membrane proteins sequentially involves thiol-disulfide transfer between OPG072, OPG128 and OPG088. In Monkeypox virus, this protein is Probable FAD-linked sulfhydryl oxidase OPG072 (OPG072).